We begin with the raw amino-acid sequence, 81 residues long: ATP synthase subunit c, chloroplastic (81 aa).

Helical transmembrane passes span 3 to 23 (PIIS…ASIG) and 57 to 77 (LAFM…LLFA).

This sequence belongs to the ATPase C chain family. In terms of assembly, F-type ATPases have 2 components, F(1) - the catalytic core - and F(0) - the membrane proton channel. F(1) has five subunits: alpha(3), beta(3), gamma(1), delta(1), epsilon(1). F(0) has four main subunits: a(1), b(1), b'(1) and c(10-14). The alpha and beta chains form an alternating ring which encloses part of the gamma chain. F(1) is attached to F(0) by a central stalk formed by the gamma and epsilon chains, while a peripheral stalk is formed by the delta, b and b' chains.

It localises to the plastid. Its subcellular location is the chloroplast thylakoid membrane. Its function is as follows. F(1)F(0) ATP synthase produces ATP from ADP in the presence of a proton or sodium gradient. F-type ATPases consist of two structural domains, F(1) containing the extramembraneous catalytic core and F(0) containing the membrane proton channel, linked together by a central stalk and a peripheral stalk. During catalysis, ATP synthesis in the catalytic domain of F(1) is coupled via a rotary mechanism of the central stalk subunits to proton translocation. Functionally, key component of the F(0) channel; it plays a direct role in translocation across the membrane. A homomeric c-ring of between 10-14 subunits forms the central stalk rotor element with the F(1) delta and epsilon subunits. The polypeptide is ATP synthase subunit c, chloroplastic (Phaseolus vulgaris (Kidney bean)).